The sequence spans 437 residues: MSMFLDTAKISVQAGRGGDGMVAFRREKYVPNGGPWGGDGGKGGSVIFRVDEGLRTLMDFRYNRKFKAKSGEKGMTKGMHGRGAEDLIVFVPQGTTVRDAETGKVITDLVEHGQEVVIAKGGRGGRGNIRFATPRNPAPEIAENGEPGEERQLELELKILADVGLVGFPSVGKSTLLSVVSSAKPKIGAYHFTTIVPNLGMVRTKSGDSFAMADLPGLIEGASQGIGLGTQFLRHIERTRVILHVIDMSASEGRDPYEDYVSINNELETYNLRLMERPQIIVANKMDMPEAQENLKAFKKKLAAQYDEFDDLPMIFPISSLAHQGLENLLEATAELLAKTDEFLLYDEADLVDEEAYYGFAETEKDFEITRDDDATWVLSGEKLERLFVMTNMERDESIMKFARQLRGMGVDEALRERGAKDGDLVRIGKFEFEFVD.

The Obg domain maps to 2–160 (SMFLDTAKIS…RQLELELKIL (159 aa)). In terms of domain architecture, OBG-type G spans 161-338 (ADVGLVGFPS…LLEATAELLA (178 aa)). GTP contacts are provided by residues 167–174 (GFPSVGKS), 192–196 (FTTIV), 214–217 (DLPG), 284–287 (NKMD), and 319–321 (SSL). Mg(2+) contacts are provided by Ser174 and Thr194. The OCT domain maps to 359–437 (GFAETEKDFE…IGKFEFEFVD (79 aa)).

This sequence belongs to the TRAFAC class OBG-HflX-like GTPase superfamily. OBG GTPase family. As to quaternary structure, monomer. Mg(2+) is required as a cofactor.

It localises to the cytoplasm. In terms of biological role, an essential GTPase which binds GTP, GDP and possibly (p)ppGpp with moderate affinity, with high nucleotide exchange rates and a fairly low GTP hydrolysis rate. Plays a role in control of the cell cycle, stress response, ribosome biogenesis and in those bacteria that undergo differentiation, in morphogenesis control. The protein is GTPase Obg of Streptococcus pyogenes serotype M4 (strain MGAS10750).